Here is a 338-residue protein sequence, read N- to C-terminus: Outer membrane transporter protein TsaT (338 aa).

The signal sequence occupies residues 1 to 22 (MNFRRRLCTAALIAALPLASQA).

As to quaternary structure, part of a two-component transport system composed of TsaT and TsaS.

The protein resides in the cell outer membrane. In terms of biological role, involved in the uptake of p-toluenesulphonate (TSA). Forms a large, general diffusion pore with a preference for anions. In Comamonas testosteroni (Pseudomonas testosteroni), this protein is Outer membrane transporter protein TsaT (tsaT).